A 205-amino-acid polypeptide reads, in one-letter code: Probable GTP-binding protein EngB (205 aa).

Residues 21–196 (QVPEVAFAGR…VHEVSKCVKE (176 aa)) form the EngB-type G domain. Residues 29–36 (GRSNVGKS), 56–60 (GSTRQ), 74–77 (DLPG), 141–144 (TKID), and 172–177 (IIGTSS) contribute to the GTP site. Residues Ser-36 and Thr-58 each contribute to the Mg(2+) site.

It belongs to the TRAFAC class TrmE-Era-EngA-EngB-Septin-like GTPase superfamily. EngB GTPase family. It depends on Mg(2+) as a cofactor.

Necessary for normal cell division and for the maintenance of normal septation. In Anaplasma marginale (strain Florida), this protein is Probable GTP-binding protein EngB.